The following is a 922-amino-acid chain: Translation initiation factor IF-2 (922 aa).

Positions 243–329 are disordered; sequence AAREAAKLAE…GKSKSGQEET (87 aa). Over residues 250-264 the composition is skewed to low complexity; sequence LAEAQKAAAPAPAAP. Positions 267 to 298 are enriched in basic and acidic residues; sequence KTLHKPDKPAAAKGAKGPDKKPAGAWKDDAAR. The tr-type G domain occupies 422-589; that stretch reads ARPPVVTVMG…AILLQAEVLE (168 aa). The segment at 431–438 is G1; that stretch reads GHVDHGKT. Residue 431-438 coordinates GTP; the sequence is GHVDHGKT. The interval 456–460 is G2; that stretch reads GITQH. Residues 477 to 480 are G3; it reads DTPG. GTP-binding positions include 477–481 and 531–534; these read DTPGH and NKID. The interval 531 to 534 is G4; that stretch reads NKID. The segment at 567–569 is G5; the sequence is SAK.

This sequence belongs to the TRAFAC class translation factor GTPase superfamily. Classic translation factor GTPase family. IF-2 subfamily.

The protein resides in the cytoplasm. One of the essential components for the initiation of protein synthesis. Protects formylmethionyl-tRNA from spontaneous hydrolysis and promotes its binding to the 30S ribosomal subunits. Also involved in the hydrolysis of GTP during the formation of the 70S ribosomal complex. The sequence is that of Translation initiation factor IF-2 from Thiobacillus denitrificans (strain ATCC 25259 / T1).